A 329-amino-acid chain; its full sequence is Deoxynucleotidyltransferase terminal-interacting protein 1 (329 aa).

Disordered stretches follow at residues 1-22 and 147-178; these read MGAT…GGLE and KRGR…ILSS. The important for dimerization stretch occupies residues 56–147; sequence MTTSFTDPAI…RLTHELPGIK (92 aa). Residues 147 to 158 show a composition bias toward basic and acidic residues; it reads KRGRQAEEECAH. Residues 159 to 173 constitute a DNA-binding region (a.T hook); it reads RGSPLPKKRKGRPPG. Ser161 carries the post-translational modification Phosphoserine. Positions 164–170 match the Nuclear localization signal motif; the sequence is PKKRKGR. An important for DNA and nucleosome binding region spans residues 197-316; sequence REGPKWDPAR…MRKYMETLRT (120 aa). A DNA-binding region (H-T-H motif) is located at residues 216–237; sequence GSRANKALGMGGTRGRIYIKHP.

In terms of assembly, monomer and homodimer. A minor proportion may form homotrimers. Interacts with ZNF541. Interacts with the terminal deoxynucleotidyltransferase DNTT. Interacts with TRERF1. Identified in a histone deacetylase complex that contains DNTTIP1, HDAC1 and MIDEAS; this complex assembles into a tetramer that contains four copies of each protein chain. Component of a histone deacetylase complex containing DNTTIP1, ZNF541, HDAC1 and HDAC2. Identified in a complex with KCTD19, HDAC1, HDAC2 and ZNF541.

The protein localises to the nucleus. Increases DNTT terminal deoxynucleotidyltransferase activity (in vitro). Also acts as a transcriptional regulator, binding to the consensus sequence 5'-GNTGCATG-3' following an AT-tract. Associates with RAB20 promoter and positively regulates its transcription. Binds DNA and nucleosomes; may recruit HDAC1 complexes to nucleosomes or naked DNA. This is Deoxynucleotidyltransferase terminal-interacting protein 1 (DNTTIP1) from Homo sapiens (Human).